The primary structure comprises 205 residues: Protein phosphatase inhibitor 2 (205 aa).

The segment at 1–44 (MAASTASHRPIKGILKNKTSTTSSVVASAEQPRRTVEEELSKKS) is disordered. N-acetylalanine is present on Ala-2. Residues 12–17 (KGILKN) are required for binding PPP1CC. Low complexity predominate over residues 19–29 (TSTTSSVVASA). The segment covering 31–44 (QPRRTVEEELSKKS) has biased composition (basic and acidic residues). The segment at 43 to 55 (KSQKWDEMNILAT) is required for binding PPP1CC. The residue at position 44 (Ser-44) is a Phosphoserine; by ATM. Residue Thr-73 is modified to Phosphothreonine; by GSK3. Phosphoserine is present on residues Ser-87 and Ser-89. A phosphothreonine mark is found at Thr-96 and Thr-116. The tract at residues 104–142 (LAAAEGSEPKFRTREQESSGEEDNDLSPEEREKKRQFEM) is disordered. Positions 110-120 (SEPKFRTREQE) are enriched in basic and acidic residues. Phosphoserine occurs at positions 121, 122, and 130. A compositionally biased stretch (acidic residues) spans 121–130 (SSGEEDNDLS). Positions 131–142 (PEEREKKRQFEM) are enriched in basic and acidic residues. The required for binding PPP1CC catalytic center, displacing metal ions and inhibition of PPP1CC catalytic activity stretch occupies residues 147 to 150 (HYNE). Positions 163–205 (KDLHDDDEDEEMSETADADSMNIEESNQGSTAGDHLQHKSQSS) are disordered. Acidic residues predominate over residues 167 to 179 (DDDEDEEMSETAD).

Belongs to the protein phosphatase inhibitor 2 family. In terms of assembly, heterodimer with PP1. Post-translationally, phosphorylation on Ser-44 by ATM activates PP1 by dissociating the PP1-PPP1R2 complex. Phosphorylation on Thr-73 by GSK3 activates PP1 by dissociating the PP1-PPP1R2 complex. As to expression, central nervous system.

Its function is as follows. Inhibitor of protein-phosphatase 1. This is Protein phosphatase inhibitor 2 (Ppp1r2) from Rattus norvegicus (Rat).